A 986-amino-acid chain; its full sequence is Regulator of telomere elongation helicase 1 homolog (986 aa).

One can recognise a Helicase ATP-binding domain in the interval 7 to 326; it reads AGIPVHFPFE…KEMLLELEKA (320 aa). 42-49 contributes to the ATP binding site; sequence SPTGTGKT. 4 residues coordinate [4Fe-4S] cluster: Cys-148, Cys-166, Cys-175, and Cys-211. A DEAH box motif is present at residues 254 to 257; sequence DEGH. The residue at position 875 (Thr-875) is a Phosphothreonine.

It belongs to the helicase family. RAD3/XPD subfamily.

The protein resides in the nucleus. It catalyses the reaction ATP + H2O = ADP + phosphate + H(+). In terms of biological role, a probable ATP-dependent DNA helicase implicated in DNA repair and the maintenance of genomic stability. Acts as an anti-recombinase to counteract toxic recombination and limit crossover during meiosis. Regulates meiotic recombination and crossover homeostasis by physically dissociating strand invasion events and thereby promotes noncrossover repair by meiotic synthesis dependent strand annealing (SDSA) as well as disassembly of D loop recombination intermediates. This is Regulator of telomere elongation helicase 1 homolog from Drosophila grimshawi (Hawaiian fruit fly).